The chain runs to 437 residues: UDP-glucuronate 4-epimerase 4 (437 aa).

Residues Ser30–Leu50 traverse the membrane as a helical segment. The disordered stretch occupies residues Ile56–Gly76. Residues Gly96–Leu116 traverse the membrane as a helical segment. Residue Thr98–Phe129 participates in NAD(+) binding. Tyr248 acts as the Proton acceptor in catalysis.

This sequence belongs to the NAD(P)-dependent epimerase/dehydratase family. In terms of assembly, homodimer. In terms of tissue distribution, in roots, leaves, siliques, flowers, pollen and stems.

The protein resides in the golgi apparatus. It is found in the golgi stack membrane. It carries out the reaction UDP-alpha-D-glucuronate = UDP-alpha-D-galacturonate. Activated by glycerol, not effected by dimethyl sulfoxide and inhibited by high concentration of monovalent salts, UDP-xylose, UDP-arabinose or UDP. In terms of biological role, involved in the synthesis of the negatively charged monosaccharide that forms the backbone of pectic cell wall components. This chain is UDP-glucuronate 4-epimerase 4 (GAE4), found in Arabidopsis thaliana (Mouse-ear cress).